The following is a 908-amino-acid chain: Serine/threonine-protein kinase WARTS homolog (908 aa).

Positions 42 to 70 form a coiled coil; it reads EIRVGRHRAKLDEIRESLKAYEHEAGLLS. Composition is skewed to low complexity over residues 115-125 and 168-181; these read VSSAAVSNSNS and PSTT…TTTE. Disordered regions lie at residues 115-134, 162-183, 203-225, and 388-412; these read VSSA…GGHK, MIRN…TEES, NNNA…DSSP, and KSRA…VSSP. Pro residues predominate over residues 392–404; it reads QPPPPQYNQPSEP. A coiled-coil region spans residues 439–470; it reads YMEQHVERLLQQYKEREKRMKQLEKEMVSAQL. The region spanning 502–807 is the Protein kinase domain; it reads FTVISHIGVG…TAQVKNHPWF (306 aa). Residues 508 to 516 and lysine 531 contribute to the ATP site; that span reads IGVGAFGKV. Aspartate 625 functions as the Proton acceptor in the catalytic mechanism. Residues 808–874 form the AGC-kinase C-terminal domain; sequence RGIDWVNLRK…RHFFDTDSVG (67 aa).

The protein belongs to the protein kinase superfamily. AGC Ser/Thr protein kinase family. As to quaternary structure, interacts (via N-terminus) with yap-1 (via WW domain). Requires Mg(2+) as cofactor. Expressed in muscles and epithelial tissues including pharynx, intestine and hypodermis. Expressed in vulval and spermathecal seam cells.

It localises to the cytoplasm. The protein resides in the apical cell membrane. The catalysed reaction is L-seryl-[protein] + ATP = O-phospho-L-seryl-[protein] + ADP + H(+). It catalyses the reaction L-threonyl-[protein] + ATP = O-phospho-L-threonyl-[protein] + ADP + H(+). Its function is as follows. Phosphorylates yap-1 which may negatively regulate yap-1 nuclear localization. Plays an essential role in larval development. Regulates growth, the formation of gut granules, lifespan and cell and body sizes probably in synergy with the TGF-beta sma/mab pathway. Does not appear to regulate apoptosis and proliferation. In addition, may synergize with the TGF-beta daf-7 dauer pathway to regulate entry into the dauer stage. Maintains the cellular integrity of intestinal cells by regulating the localization of apical actin and junctional proteins. This Caenorhabditis elegans protein is Serine/threonine-protein kinase WARTS homolog.